Reading from the N-terminus, the 347-residue chain is Putative GDP-L-fucose synthase 2 (347 aa).

Residues 1-20 form a disordered region; sequence MPSQQRSSSGSTAKAGDADG. 41–47 is a binding site for NADP(+); the sequence is GHRGMVG. Catalysis depends on Y168, which acts as the Proton donor/acceptor. NADP(+) is bound by residues K172, 195 to 198, and H211; that span reads PNNL. Substrate is bound by residues R219, W234, R241, and E301.

Belongs to the NAD(P)-dependent epimerase/dehydratase family. Fucose synthase subfamily. As to quaternary structure, homodimer.

It catalyses the reaction GDP-beta-L-fucose + NADP(+) = GDP-4-dehydro-alpha-D-rhamnose + NADPH + H(+). The protein operates within nucleotide-sugar biosynthesis; GDP-L-fucose biosynthesis via de novo pathway; GDP-L-fucose from GDP-alpha-D-mannose: step 2/2. Functionally, catalyzes the two-step NADP-dependent conversion of GDP-4-dehydro-6-deoxy-D-mannose to GDP-fucose, involving an epimerase and a reductase reaction. This chain is Putative GDP-L-fucose synthase 2, found in Oryza sativa subsp. japonica (Rice).